Consider the following 302-residue polypeptide: tRNA-cytidine(32) 2-sulfurtransferase (302 aa).

Residues 57–62 (SGGKDS) carry the PP-loop motif motif. Residues C132, C135, and C223 each contribute to the [4Fe-4S] cluster site.

The protein belongs to the TtcA family. Homodimer. It depends on Mg(2+) as a cofactor. [4Fe-4S] cluster serves as cofactor.

The protein resides in the cytoplasm. It carries out the reaction cytidine(32) in tRNA + S-sulfanyl-L-cysteinyl-[cysteine desulfurase] + AH2 + ATP = 2-thiocytidine(32) in tRNA + L-cysteinyl-[cysteine desulfurase] + A + AMP + diphosphate + H(+). Its pathway is tRNA modification. In terms of biological role, catalyzes the ATP-dependent 2-thiolation of cytidine in position 32 of tRNA, to form 2-thiocytidine (s(2)C32). The sulfur atoms are provided by the cysteine/cysteine desulfurase (IscS) system. The protein is tRNA-cytidine(32) 2-sulfurtransferase of Marinobacter nauticus (strain ATCC 700491 / DSM 11845 / VT8) (Marinobacter aquaeolei).